Here is an 809-residue protein sequence, read N- to C-terminus: H(+)/Cl(-) exchange transporter 7 (809 aa).

The Cytoplasmic segment spans residues 1 to 130 (MANVSKKVSW…TAFRTVEIKR (130 aa)). 2 positions are modified to phosphoserine: serine 9 and serine 64. The next 2 membrane-spanning stretches (helical) occupy residues 131-163 (WVIC…YRLV) and 178-201 (FSLL…VAFI). A Selectivity filter part_1 motif is present at residues 207 to 211 (GSGIP). Serine 208 contacts chloride. Positions 210–217 (IPQIKCFL) form an intramembrane region, helical. Helical transmembrane passes span 227-245 (RLKT…VVGG) and 251-268 (EGPM…ISQG). The Selectivity filter part_2 motif lies at 249–253 (GKEGP). Intramembrane regions (helical) lie at residues 292–304 (FVSA…VSAA) and 308–316 (PVGGVLFSL). Transmembrane regions (helical) follow at residues 326–345 (FLTW…LNFV), 379–409 (IPIF…FRIR), 414–436 (PCLQ…FVLI), 491–511 (PMTL…TYGL), and 516–539 (GVFI…LSYI). A Selectivity filter part_3 motif is present at residues 516 to 520 (GVFIP). Residue phenylalanine 518 coordinates chloride. The helical intramembrane region spans 549-563 (GKYALMGAAAQLGGI). Residues 564–566 (VRM) constitute an intramembrane region (note=Loop between two helices). The segment at residues 567 to 578 (TLSLTVIMMEAT) is an intramembrane region (helical). Residues 579 to 582 (SSVT) constitute an intramembrane region (note=Loop between two helices). The chain crosses the membrane as a helical span at residues 583–601 (YGFPIMLVLMTAKIVGDVF). Over 602–809 (IEGLYDMHIQ…GLEELSLAQT (208 aa)) the chain is Cytoplasmic. A chloride-binding site is contributed by tyrosine 606. CBS domains are found at residues 635–699 (MSTP…VFVE) and 745–803 (MNPS…GLEE). ATP contacts are provided by residues 662–664 (HNG) and 787–790 (TRKD). A Phosphoserine modification is found at serine 805.

Belongs to the chloride channel (TC 2.A.49) family. ClC-7/CLCN7 subfamily. In terms of assembly, chloride channel 7 are heteromers of alpha (CLCN7) and beta (OSTM1) subunits.

The protein localises to the lysosome membrane. It carries out the reaction 2 chloride(in) + H(+)(out) = 2 chloride(out) + H(+)(in). Slowly voltage-gated channel mediating the exchange of chloride ions against protons. Functions as antiporter and contributes to the acidification of the lysosome lumen and may be involved in maintaining lysosomal pH. The CLC channel family contains both chloride channels and proton-coupled anion transporters that exchange chloride or another anion for protons. The presence of conserved gating glutamate residues is typical for family members that function as antiporters. This Bos taurus (Bovine) protein is H(+)/Cl(-) exchange transporter 7 (CLCN7).